A 1066-amino-acid polypeptide reads, in one-letter code: Isoleucine--tRNA ligase (1066 aa).

A 'HIGH' region motif is present at residues 49–59 (PYVSGAIHLGT). The 'KMSKS' region signature appears at 625–629 (KMSKS). Lys628 is an ATP binding site.

Belongs to the class-I aminoacyl-tRNA synthetase family. IleS type 2 subfamily. As to quaternary structure, monomer. It depends on Zn(2+) as a cofactor.

Its subcellular location is the cytoplasm. It carries out the reaction tRNA(Ile) + L-isoleucine + ATP = L-isoleucyl-tRNA(Ile) + AMP + diphosphate. Catalyzes the attachment of isoleucine to tRNA(Ile). As IleRS can inadvertently accommodate and process structurally similar amino acids such as valine, to avoid such errors it has two additional distinct tRNA(Ile)-dependent editing activities. One activity is designated as 'pretransfer' editing and involves the hydrolysis of activated Val-AMP. The other activity is designated 'posttransfer' editing and involves deacylation of mischarged Val-tRNA(Ile). This chain is Isoleucine--tRNA ligase, found in Pyrococcus furiosus (strain ATCC 43587 / DSM 3638 / JCM 8422 / Vc1).